Here is a 247-residue protein sequence, read N- to C-terminus: Phycocyanobilin:ferredoxin oxidoreductase (247 aa).

Belongs to the HY2 family.

The catalysed reaction is (2R,3Z)-phycocyanobilin + 4 oxidized [2Fe-2S]-[ferredoxin] = biliverdin IXalpha + 4 reduced [2Fe-2S]-[ferredoxin] + 4 H(+). In terms of biological role, catalyzes the four-electron reduction of biliverdin IX-alpha (2-electron reduction at both the A and D rings); the reaction proceeds via an isolatable 2-electron intermediate, 181,182-dihydrobiliverdin. In Synechococcus sp. (strain CC9605), this protein is Phycocyanobilin:ferredoxin oxidoreductase.